The primary structure comprises 326 residues: Archaeal actin homolog (326 aa).

Residues 10–14 (YGDTK), Ser179, Gln231, 285–288 (GGSN), and Gln311 contribute to the ATP site.

The protein belongs to the thermophilic archaeal actin family.

Its function is as follows. Polymerizes into bundles of filaments, forming a helix with a filament width of 5.5 nm and an axial repeating unit of 5.5 nm. Polymerization of Ta0583 requires NTP and is optimal with ATP, but GTP, UTP, CTP, and even the deoxy form of NTP can also support the polymerization reaction. Nucleoside diphosphate or AMP-PNP does not support polymerization. The polypeptide is Archaeal actin homolog (Thermoplasma acidophilum (strain ATCC 25905 / DSM 1728 / JCM 9062 / NBRC 15155 / AMRC-C165)).